The chain runs to 351 residues: MFTSLKKVATFSFLVWISQYSGSNSCSSSLVKHIPQTGSNLTFDRVLVEDTVHPEHLHEEHHHHHPEEHHEPHHEEHHHHHPEEHHEPHHEEHHHHHPHPHHHHHHHPPHHHHHLGHHHHHHHAAHHHHHEEHHHHHHAAHHHHHEEHHHHHHAAHHHPWFHHHHLGYHHHHAPHHHHHHHHAPHHHHHHHHAPHHHHHHHHAPHHHHHHHHAPHHHHHHHHGHHHHHHHHHGHHHHHHHHHGHHHHHHHHHDAHHHHHHHHDAHHHHHHHHDAHHHHHHHHDAHHHHHHHHDAHHHHHHHHDAHHHHHHHDAHHHHHHHHDAHHHHHHHHDAHHHHHHHHDAHHHHHHHH.

Positions 1 to 23 (MFTSLKKVATFSFLVWISQYSGS) are cleaved as a signal peptide. The propeptide occupies 24–47 (NSCSSSLVKHIPQTGSNLTFDRVL). N-linked (GlcNAc...) asparagine glycosylation is present at N40. The segment covering 57 to 91 (LHEEHHHHHPEEHHEPHHEEHHHHHPEEHHEPHHE) has biased composition (basic and acidic residues). The segment at 57 to 351 (LHEEHHHHHP…DAHHHHHHHH (295 aa)) is disordered. 6 consecutive repeat copies span residues 59-74 (EEHH…EPHH), 75-90 (EEHH…EPHH), 91-107 (EEHH…HHHH), 108-123 (PPHH…HHHH), 124-138 (AAHH…HHHH), and 139-153 (AAHH…HHHH). A 2 X 16 AA tandem repeats region spans residues 59 to 90 (EEHHHHHPEEHHEPHHEEHHHHHPEEHHEPHH). The tract at residues 91–123 (EEHHHHHPHPHHHHHHHPPHHHHHLGHHHHHHH) is 2 X 17 AA tandem repeats. Residues 92–351 (EHHHHHPHPH…DAHHHHHHHH (260 aa)) show a composition bias toward basic residues. Positions 124–153 (AAHHHHHEEHHHHHHAAHHHHHEEHHHHHH) are 2 X 15 AA tandem repeats. Positions 173-351 (APHHHHHHHH…DAHHHHHHHH (179 aa)) are 18 X 10 AA tandem repeats.

The protein is Histidine-rich glycoprotein of Plasmodium lophurae.